The sequence spans 262 residues: Aconitate isomerase (262 aa).

A signal peptide spans 1–22; it reads MFPRLPTLALGALLLASTPLLA.

In terms of assembly, monomer.

It catalyses the reaction trans-aconitate = cis-aconitate. Its activity is regulated as follows. Activated more than 1.5 fold by Ca(2+), Mg(2+), Mn(2+), Ni(2+), Fe(2+), DDT and 1,10-phenanthroline. Strongly inhibited by Ag(+) and Hg(+). Inhibited by addition of 20% (v/v) glycerol. No effect by addition of NADH or NADPH. Functionally, involved in assimilation of trans-aconitic acid. Preference for cis-aconitic acid is 14-fold higher than for trans-aconitic acid. Not active on intermediates of tricarboxylic acid (TCA) cycle including citric acid, succinic acid, fumaric acid, and 2-oxoglutaric acid or on other dicarboxilic acids including itaconic acid, formic acid, citraconic acid or maleic acid. This chain is Aconitate isomerase, found in Pseudomonas sp.